The following is a 160-amino-acid chain: Small ribosomal subunit protein uS7 (160 aa).

This sequence belongs to the universal ribosomal protein uS7 family. As to quaternary structure, part of the 30S ribosomal subunit. Contacts proteins S9 and S11.

Functionally, one of the primary rRNA binding proteins, it binds directly to 16S rRNA where it nucleates assembly of the head domain of the 30S subunit. Is located at the subunit interface close to the decoding center, probably blocks exit of the E-site tRNA. In Rickettsia canadensis (strain McKiel), this protein is Small ribosomal subunit protein uS7.